Reading from the N-terminus, the 228-residue chain is Probable septum site-determining protein MinC (228 aa).

Belongs to the MinC family. As to quaternary structure, interacts with MinD and FtsZ.

Functionally, cell division inhibitor that blocks the formation of polar Z ring septums. Rapidly oscillates between the poles of the cell to destabilize FtsZ filaments that have formed before they mature into polar Z rings. Prevents FtsZ polymerization. This Bacillus mycoides (strain KBAB4) (Bacillus weihenstephanensis) protein is Probable septum site-determining protein MinC.